Reading from the N-terminus, the 61-residue chain is Large ribosomal subunit protein eL20 (61 aa).

The protein belongs to the eukaryotic ribosomal protein eL20 family. Part of the 50S ribosomal subunit. Binds 23S rRNA.

The sequence is that of Large ribosomal subunit protein eL20 from Methanosarcina acetivorans (strain ATCC 35395 / DSM 2834 / JCM 12185 / C2A).